The chain runs to 698 residues: Elongation factor G 1 (698 aa).

The 283-residue stretch at 8–290 (ERYRNIGIVA…AVVDYLPAPI (283 aa)) folds into the tr-type G domain. Residues 17-24 (AHVDAGKT), 88-92 (DTPGH), and 142-145 (NKMD) each bind GTP.

Belongs to the TRAFAC class translation factor GTPase superfamily. Classic translation factor GTPase family. EF-G/EF-2 subfamily.

It is found in the cytoplasm. In terms of biological role, catalyzes the GTP-dependent ribosomal translocation step during translation elongation. During this step, the ribosome changes from the pre-translocational (PRE) to the post-translocational (POST) state as the newly formed A-site-bound peptidyl-tRNA and P-site-bound deacylated tRNA move to the P and E sites, respectively. Catalyzes the coordinated movement of the two tRNA molecules, the mRNA and conformational changes in the ribosome. The chain is Elongation factor G 1 from Shewanella denitrificans (strain OS217 / ATCC BAA-1090 / DSM 15013).